Reading from the N-terminus, the 1755-residue chain is Transposon Ty1-LR3 Gag-Pol polyprotein (1755 aa).

Positions 1-16 (MESQQLSQHSHISHGS) are enriched in low complexity. 3 disordered regions span residues 1 to 93 (MESQ…MMTQ), 126 to 173 (PQSQ…RPPP), and 352 to 421 (GSRN…SKST). Polar residues-rich tracts occupy residues 48-60 (TKAN…TPAS) and 127-152 (QSQF…GNTF). Over residues 153-165 (TDSSSADSDMTST) the composition is skewed to low complexity. The interval 299-401 (NNGIHINNKV…NSKSKTARAH (103 aa)) is RNA-binding. The segment covering 402–418 (NVSTSNNSPSTDNDSIS) has biased composition (low complexity). At S416 the chain carries Phosphoserine. Residue D461 is the For protease activity; shared with dimeric partner of the active site. Residues 583–640 (NVHTSESTRKYPYPFIHRMLAHANAQTIRYSLKNNTITYFNESDVDWSSAIDYQCPDC) are integrase-type zinc finger-like. In terms of domain architecture, Integrase catalytic spans 660-829 (NSYEPFQYLH…SQHAGLAGLD (170 aa)). 2 residues coordinate Mg(2+): D671 and D736. Disordered regions lie at residues 956–1087 (SKAV…ETEK), 1092–1111 (RSPS…NIVP), and 1129–1172 (ADLP…SNAY). Residues 960–969 (SPTDSTPPST) show a composition bias toward low complexity. Over residues 1005–1015 (STPQISNIEST) the composition is skewed to polar residues. Basic and acidic residues predominate over residues 1038–1052 (ESSHASKSKDFRHSD). 2 stretches are compositionally biased toward polar residues: residues 1053–1082 (SYSN…QISD) and 1101–1111 (PENNSSHNIVP). Positions 1178-1212 (KKRSLEDNETEIKVSRDTWNTKNMRSLEPPRSKKR) match the Bipartite nuclear localization signal motif. Residues 1338–1476 (NNYYITQLDI…DILGLEIKYQ (139 aa)) enclose the Reverse transcriptase Ty1/copia-type domain. 6 residues coordinate Mg(2+): D1346, D1427, D1428, D1610, E1652, and D1685. Residues 1610 to 1752 (DASYGNQPYY…IKTFKLLTNK (143 aa)) form the RNase H Ty1/copia-type domain.

As to quaternary structure, the capsid protein forms a homotrimer, from which the VLPs are assembled. The protease is a homodimer, whose active site consists of two apposed aspartic acid residues. Post-translationally, initially, virus-like particles (VLPs) are composed of the structural unprocessed proteins Gag and Gag-Pol, and also contain the host initiator methionine tRNA (tRNA(i)-Met) which serves as a primer for minus-strand DNA synthesis, and a dimer of genomic Ty RNA. Processing of the polyproteins occurs within the particle and proceeds by an ordered pathway, called maturation. First, the protease (PR) is released by autocatalytic cleavage of the Gag-Pol polyprotein yielding capsid protein p45 and a Pol-p154 precursor protein. This cleavage is a prerequisite for subsequent processing of Pol-p154 at the remaining sites to release the mature structural and catalytic proteins. Maturation takes place prior to the RT reaction and is required to produce transposition-competent VLPs.

It localises to the cytoplasm. Its subcellular location is the nucleus. The enzyme catalyses DNA(n) + a 2'-deoxyribonucleoside 5'-triphosphate = DNA(n+1) + diphosphate. It carries out the reaction Endonucleolytic cleavage to 5'-phosphomonoester.. Its function is as follows. Capsid protein (CA) is the structural component of the virus-like particle (VLP), forming the shell that encapsulates the retrotransposons dimeric RNA genome. The particles are assembled from trimer-clustered units and there are holes in the capsid shells that allow for the diffusion of macromolecules. CA also has nucleocapsid-like chaperone activity, promoting primer tRNA(i)-Met annealing to the multipartite primer-binding site (PBS), dimerization of Ty1 RNA and initiation of reverse transcription. The aspartyl protease (PR) mediates the proteolytic cleavages of the Gag and Gag-Pol polyproteins after assembly of the VLP. In terms of biological role, reverse transcriptase/ribonuclease H (RT) is a multifunctional enzyme that catalyzes the conversion of the retro-elements RNA genome into dsDNA within the VLP. The enzyme displays a DNA polymerase activity that can copy either DNA or RNA templates, and a ribonuclease H (RNase H) activity that cleaves the RNA strand of RNA-DNA heteroduplexes during plus-strand synthesis and hydrolyzes RNA primers. The conversion leads to a linear dsDNA copy of the retrotransposon that includes long terminal repeats (LTRs) at both ends. Functionally, integrase (IN) targets the VLP to the nucleus, where a subparticle preintegration complex (PIC) containing at least integrase and the newly synthesized dsDNA copy of the retrotransposon must transit the nuclear membrane. Once in the nucleus, integrase performs the integration of the dsDNA into the host genome. This is Transposon Ty1-LR3 Gag-Pol polyprotein (TY1B-LR3) from Saccharomyces cerevisiae (strain ATCC 204508 / S288c) (Baker's yeast).